We begin with the raw amino-acid sequence, 165 residues long: Lithostathine (165 aa).

An N-terminal signal peptide occupies residues 1–21; that stretch reads MTRNKYFILLSCLMVLSPSQG. Gln-22 carries the post-translational modification Pyrrolidone carboxylic acid. The C-type lectin domain occupies 33–163; sequence ITCPEGSNAY…DAQLSFVCKF (131 aa). 3 disulfide bridges follow: Cys-35–Cys-46, Cys-63–Cys-161, and Cys-136–Cys-153. An N-linked (GlcNAc...) asparagine glycan is attached at Asn-129.

In terms of tissue distribution, expressed only in regenerating islets, but not in normal pancreatic islets, insulinomas or regenerating liver.

The protein localises to the secreted. Might act as an inhibitor of spontaneous calcium carbonate precipitation. The sequence is that of Lithostathine (Reg1) from Rattus norvegicus (Rat).